The chain runs to 299 residues: Phosphatidylinositol-3-phosphatase (299 aa).

The first 43 residues, 1 to 43 (MLRGIQALSRPLTRVYRALAVIGVLAASLLASWVGAVPQVGLA), serve as a signal peptide directing secretion.

In terms of assembly, monomer. SapM interacts with host RAB7 via its C-terminus. A metal cation is required as a cofactor.

It localises to the secreted. It is found in the host cytoplasmic vesicle. The protein resides in the host phagosome. The catalysed reaction is a phosphate monoester + H2O = an alcohol + phosphate. It carries out the reaction a 1,2-diacyl-sn-glycero-3-phospho-(1D-myo-inositol-3-phosphate) + H2O = a 1,2-diacyl-sn-glycero-3-phospho-(1D-myo-inositol) + phosphate. Its activity is regulated as follows. Phosphatase activity is inhibited in vitro by low concentrations of several heavy metals (zinc chloride, sodium molybdate, magnesium chloride, and copper sulfate) and moderately high concentrations (&gt;8 mM) of EDTA. Its function is as follows. Virulence factor that plays an important role in blocking phagosome-lysosome fusion and thus participates in the intracellular survival of the pathogen. Acts as a phosphatase that dephosphorylates phosphatidylinositol 3-phosphate (PI3P), a membrane trafficking regulatory lipid essential for phagosomal acquisition of lysosomal constituents. Therefore, SapM eliminates PI3P from the phagosomal membrane by catalyzing its hydrolysis, and thus contributes to inhibition of phagosome maturation. Also interferes with autophagy: SapM blocks autophagosome-lysosome fusion in macrophages by binding to the small GTPase RAB7, which prevents RAB7 from being involved in this process and thus negatively regulates autophagy flux. In vitro, displays phosphatase activity with broad specificity; can dephosphorylate a variety of phosphoester substrates, with the highest activity against phosphoenolpyruvate, glycerophosphate, GTP, NADPH, phosphotyrosine and trehalose-6-phosphate. In contrast, the enzyme exhibits poor activity against glucose-6-phosphate, phosphothreonine, and a number of nucleotides (NADP, ATP, AMP, and GMP). This chain is Phosphatidylinositol-3-phosphatase, found in Mycobacterium tuberculosis (strain ATCC 25618 / H37Rv).